We begin with the raw amino-acid sequence, 923 residues long: Periodic tryptophan protein 2 (923 aa).

5 WD repeats span residues 12 to 52 (GTVY…TFEY), 53 to 93 (EHRK…LHHF), 94 to 132 (NFKEKCSAVKFSPDGRLFALASGRFLQIWKTPDVNKDRQ), 144 to 183 (GHFQDITSLTWSQDSRFILTTSKDLSAKIWSVDSEEKNLA), and 189 to 228 (GHRDYVMGAFFSHDQEKIYTVSKDGAVFVWEFTKRPSDDD). Phosphoserine occurs at positions 225 and 232. WD repeat units lie at residues 258–297 (ANQAKVKCVTFHPATRLLAVGFTSGEFRLYDLPDFTLIQQ), 300–340 (MGQN…YILK), 343–382 (GHFDSTNSLAYSPDGSRVVTASEDGKIKVWDITSGFCLAT), 385–424 (EHTSSVTAVQFAKRGQVMFSSSLDGTVRAWDLIRYRNFRT), 428–470 (TERI…DALS), 471–510 (GHEGPVSCLSFSQENSVLASASWDKTIRIWSIFGRSQQVE), 513–552 (EVYSDVLALSMRPDGKEVAVSTLKGQISIFNIEDAKQVGN), and 575–614 (ERSKFFTTIHYSFDGMAIVAGGNNNSICLYDVPNEVLLKR). Phosphoserine is present on residues S651 and S664. Residues 653–674 (LEDRIDNSLPGSQRGGDLSTRK) are disordered. A WD 14 repeat occupies 676-714 (RPEVRVTSVQFSPTANAFAAASTEGLLIYSTNDTILFDP). Composition is skewed to acidic residues over residues 869–893 (KDDADEDNEENEENDVVMESDDEEG) and 911–923 (DSSDEEENEKELP). Positions 869 to 923 (KDDADEDNEENEENDVVMESDDEEGWIGFNGKDNKLPLSNENDSSDEEENEKELP) are disordered. S912 and S913 each carry phosphoserine.

This sequence belongs to the WD repeat PWP2 family. As to quaternary structure, interacts with snoRNA U3. Interacts with MPP10. Component of the ribosomal small subunit (SSU) processome composed of at least 40 protein subunits and snoRNA U3.

The protein resides in the nucleus. Its subcellular location is the nucleolus. In terms of biological role, required for bud-site selection and cell separation. Also involved in nucleolar processing of pre-18S ribosomal RNA. This Saccharomyces cerevisiae (strain ATCC 204508 / S288c) (Baker's yeast) protein is Periodic tryptophan protein 2 (PWP2).